The chain runs to 355 residues: Vacuolar protein sorting-associated protein 37C (355 aa).

A Phosphoserine modification is found at S29. Residues 78–167 form the VPS37 C-terminal domain; the sequence is VERCQEQKAK…RKPRASQELA (90 aa). The interval 159–355 is disordered; that stretch reads KPRASQELAG…PPPGPAWPGY (197 aa). Pro residues-rich tracts occupy residues 170–186 and 194–214; these read APPPRPPPPVRPVPQGT and PQPPLAMPPYPLPYSPSPSLP. A compositionally biased stretch (low complexity) spans 291–304; it reads APSPGYPQQSPYPA. Over residues 321–355 the composition is skewed to pro residues; that stretch reads PGQPQPSVPLQPPYPPGPAPPYGFPPPPGPAWPGY.

The protein belongs to the VPS37 family. As to quaternary structure, component of the ESCRT-I complex (endosomal sorting complex required for transport I) which consists of TSG101, VPS28, a VPS37 protein (VPS37A to -D) and MVB12A or MVB12B in a 1:1:1:1 stoichiometry. Interacts with TSG101, VPS28, MVB12A and MVB12B. Component of the ESCRT-I complex (endosomal sorting complex required for transport I) which consists of TSG101, VPS28, a VPS37 protein (VPS37A to -D) and UBAP1 in a 1:1:1:1 stoichiometry. Interacts with HGS and STAM2. Interacts with CEP55. Post-translationally, phosphorylated by TBK1.

It localises to the late endosome membrane. Component of the ESCRT-I complex, a regulator of vesicular trafficking process. Required for the sorting of endocytic ubiquitinated cargos into multivesicular bodies. May be involved in cell growth and differentiation. This is Vacuolar protein sorting-associated protein 37C (VPS37C) from Homo sapiens (Human).